A 262-amino-acid chain; its full sequence is Large ribosomal subunit protein bL9m (262 aa).

A mitochondrion-targeting transit peptide spans 1-49 (MAASMAPRCSSLLWAGAAWLRQRGIGELLQPRIERSTPGRDFSLSHYQS).

Belongs to the bacterial ribosomal protein bL9 family. As to quaternary structure, component of the mitochondrial ribosome large subunit (39S) which comprises a 16S rRNA and about 50 distinct proteins.

Its subcellular location is the mitochondrion. This chain is Large ribosomal subunit protein bL9m (Mrpl9), found in Rattus norvegicus (Rat).